The sequence spans 1483 residues: Dynein axonemal assembly factor 1 homolog (1483 aa).

LRR repeat units lie at residues 34 to 56 (RLND…EEYT), 57 to 78 (ELKC…EKLS), 79 to 100 (KLKC…DPCR), 101 to 122 (ELDT…GTNV), 125 to 146 (VLNT…SDLI), and 150 to 171 (TLSV…KIFE). The LRRCT domain maps to 185-223 (PVVSRLPQYRKTLILACKELTYLDSRPVFPRDRACAEAW). Disordered stretches follow at residues 249–282 (SINC…TCAE), 300–327 (EEVS…GTSS), 945–986 (DSGD…HGTK), and 1167–1213 (SENE…SIDD). A compositionally biased stretch (polar residues) spans 311 to 327 (DGTNSSSSLEDNDGTSS). A compositionally biased stretch (basic and acidic residues) spans 1183–1196 (TNDKESSDIMEKNG).

This sequence belongs to the DNAAF1 family.

Its subcellular location is the cell projection. The protein localises to the cilium. Functionally, cilium-specific protein required for cilia structures. This is Dynein axonemal assembly factor 1 homolog (dtr) from Drosophila melanogaster (Fruit fly).